Reading from the N-terminus, the 216-residue chain is uncharacterized protein (216 aa).

A signal peptide spans 1 to 17; it reads MLKKIIILFLGMFLLSA. Cysteine 18 carries the N-palmitoyl cysteine lipid modification. Cysteine 18 carries the S-diacylglycerol cysteine lipid modification. The stretch at 133–162 forms a coiled coil; the sequence is SDKEKKIQEELNQIKAMLRETKRDISKYTC.

Its subcellular location is the cell membrane. This is an uncharacterized protein from Rickettsia conorii (strain ATCC VR-613 / Malish 7).